The chain runs to 386 residues: Probable copper-dependent oxygenase M1 (386 aa).

A signal peptide spans 1-22 (MLRMKKICTAFLTIALCTHVLA). N86 carries N-linked (GlcNAc...) asparagine glycosylation. A helical transmembrane segment spans residues 334–354 (FVVPIAAIAFIALTIGAGYVF).

This sequence belongs to the clz3 oxygenase family.

The protein resides in the membrane. It participates in secondary metabolite biosynthesis. Functionally, probable copper-dependent oxygenase; part of the gene cluster that mediates the biosynthesis of squalestatin S1 (SQS1, also known as zaragozic acid A), a heavily oxidized fungal polyketide that offers potent cholesterol lowering activity by targeting squalene synthase (SS). SQS1 is composed of a 2,8-dioxobicyclic[3.2.1]octane-3,4,5-tricarboxyclic acid core that is connected to two lipophilic polyketide arms. These initial steps feature the priming of an unusual benzoic acid starter unit onto the highly reducing polyketide synthase pks2, followed by oxaloacetate extension and product release to generate a tricarboxylic acid containing product. The phenylalanine ammonia lyase (PAL) M7 and the acyl-CoA ligase M9 are involved in transforming phenylalanine into benzoyl-CoA. The citrate synthase-like protein R3 is involved in connecting the C-alpha-carbons of the hexaketide chain and oxaloacetate to afford the tricarboxylic acid unit. The potential hydrolytic enzymes, M8 and M10, are in close proximity to pks2 and may participate in product release. On the other side, the tetraketide arm is synthesized by a the squalestatin tetraketide synthase pks1 and enzymatically esterified to the core in the last biosynthetic step, by the acetyltransferase M4. The biosynthesis of the tetraketide must involve 3 rounds of chain extension. After the first and second rounds methyl-transfer occurs, and in all rounds of extension the ketoreductase and dehydratase are active. The enoyl reductase and C-MeT of pks1 are not active in the final round of extension. The acetyltransferase M4 appears to have a broad substrate selectivity for its acyl CoA substrate, allowing the in vitro synthesis of novel squalestatins. The biosynthesis of SQS1 requires several oxidative steps likely performed by oxidoreductases M1, R1 and R2. Finally, in support of the identification of the cluster as being responsible for SQS1 production, the cluster contains a gene encoding a putative squalene synthase (SS) R6, suggesting a likely mechanism for self-resistance. The sequence is that of Probable copper-dependent oxygenase M1 from Phoma sp. (strain ATCC 20986 / MF5453).